We begin with the raw amino-acid sequence, 287 residues long: ATP synthase gamma chain (287 aa).

Belongs to the ATPase gamma chain family. F-type ATPases have 2 components, CF(1) - the catalytic core - and CF(0) - the membrane proton channel. CF(1) has five subunits: alpha(3), beta(3), gamma(1), delta(1), epsilon(1). CF(0) has three main subunits: a, b and c.

Its subcellular location is the cell inner membrane. Its function is as follows. Produces ATP from ADP in the presence of a proton gradient across the membrane. The gamma chain is believed to be important in regulating ATPase activity and the flow of protons through the CF(0) complex. The protein is ATP synthase gamma chain of Stenotrophomonas maltophilia (strain R551-3).